Consider the following 365-residue polypeptide: Probable receptor-like protein kinase At2g47060 (365 aa).

The tract at residues 18-48 (DYGGRHNQAKHFPPGNDARHHQASETAQKGP) is disordered. The Protein kinase domain maps to 73–353 (FGSNSLIGEG…IVVKALQPLL (281 aa)). ATP-binding positions include 79-87 (IGEGSYGRV) and lysine 101. The residue at position 145 (tyrosine 145) is a Phosphotyrosine. The active-site Proton acceptor is aspartate 203. A phosphoserine mark is found at serine 207 and serine 237. Phosphothreonine is present on residues threonine 238 and threonine 243. Tyrosine 251 bears the Phosphotyrosine mark.

Belongs to the protein kinase superfamily. Ser/Thr protein kinase family.

The enzyme catalyses L-seryl-[protein] + ATP = O-phospho-L-seryl-[protein] + ADP + H(+). The catalysed reaction is L-threonyl-[protein] + ATP = O-phospho-L-threonyl-[protein] + ADP + H(+). This is Probable receptor-like protein kinase At2g47060 from Arabidopsis thaliana (Mouse-ear cress).